The primary structure comprises 353 residues: Nicotinate-nucleotide--dimethylbenzimidazole phosphoribosyltransferase (353 aa).

The Proton acceptor role is filled by Glu319.

This sequence belongs to the CobT family.

The catalysed reaction is 5,6-dimethylbenzimidazole + nicotinate beta-D-ribonucleotide = alpha-ribazole 5'-phosphate + nicotinate + H(+). It participates in nucleoside biosynthesis; alpha-ribazole biosynthesis; alpha-ribazole from 5,6-dimethylbenzimidazole: step 1/2. Its function is as follows. Catalyzes the synthesis of alpha-ribazole-5'-phosphate from nicotinate mononucleotide (NAMN) and 5,6-dimethylbenzimidazole (DMB). In Prosthecochloris aestuarii (strain DSM 271 / SK 413), this protein is Nicotinate-nucleotide--dimethylbenzimidazole phosphoribosyltransferase.